Here is a 161-residue protein sequence, read N- to C-terminus: Phenolic acid decarboxylase PadC (161 aa).

Residues tyrosine 11 and tyrosine 13 each contribute to the substrate site. The active-site Proton donor is the tyrosine 19. Arginine 41 is a binding site for substrate. The active-site Proton acceptor is the glutamate 64.

The protein belongs to the PadC family. Homodimer.

It carries out the reaction (E)-4-coumarate + H(+) = 4-vinylphenol + CO2. The catalysed reaction is (E)-cinnamate + H(+) = styrene + CO2. It catalyses the reaction (E)-ferulate + H(+) = 2-methoxy-4-vinylphenol + CO2. Its function is as follows. Involved in the decarboxylation and detoxification of phenolic derivatives. It is able to catalyze the decarboxylation of ferulic, p-coumaric and caffeic acids. In Bacillus subtilis (strain 168), this protein is Phenolic acid decarboxylase PadC (padC).